The following is a 194-amino-acid chain: Recombination protein RecR (194 aa).

The segment at 55-70 adopts a C4-type zinc-finger fold; that stretch reads CRECGNLAEGELCPIC. In terms of domain architecture, Toprim spans 78 to 171; sequence SLLAVVESVA…RVTRPAYGLP (94 aa).

The protein belongs to the RecR family.

In terms of biological role, may play a role in DNA repair. It seems to be involved in an RecBC-independent recombinational process of DNA repair. It may act with RecF and RecO. In Thermus thermophilus (strain ATCC BAA-163 / DSM 7039 / HB27), this protein is Recombination protein RecR.